Reading from the N-terminus, the 87-residue chain is U3-theraphotoxin-Hhn1a 6 (87 aa).

A signal peptide spans 1-24 (MVNMKASMFLTFAGLVLLFVVCYA). Positions 25 to 52 (SESEKKEFPKEMLSSIFAVDNDFKQEER) are excised as a propeptide. Cystine bridges form between Cys54–Cys67, Cys61–Cys72, and Cys66–Cys79.

This sequence belongs to the neurotoxin 10 (Hwtx-1) family. 51 (Hntx-8) subfamily. Hntx-8 sub-subfamily. In terms of tissue distribution, expressed by the venom gland.

It localises to the secreted. Its function is as follows. Ion channel inhibitor. This is U3-theraphotoxin-Hhn1a 6 from Cyriopagopus hainanus (Chinese bird spider).